The chain runs to 1722 residues: Lymphocyte antigen 75 (1722 aa).

A signal peptide spans 1–27; that stretch reads MRTGWATPRRPAGLLMLLFWFFDLAEP. The Extracellular segment spans residues 28-1666; sequence SGRAANDPFT…VVCKVPLGPD (1639 aa). The Ricin B-type lectin domain occupies 33–156; it reads NDPFTIVHGN…ESLCDQPYHE (124 aa). An N-linked (GlcNAc...) asparagine glycan is attached at asparagine 135. Residues 164–211 form the Fibronectin type-II domain; sequence SYGRPCEFPFLIDGTWHHDCILDEDHSGPWCATTLNYEYDRKWGICLK. 4 disulfide bridges follow: cysteine 169/cysteine 194, cysteine 183/cysteine 209, cysteine 247/cysteine 340, and cysteine 317/cysteine 332. One can recognise a C-type lectin 1 domain in the interval 225 to 341; the sequence is QFGSCYQFNT…CEAQLPYVCR (117 aa). Residues asparagine 345 and asparagine 377 are each glycosylated (N-linked (GlcNAc...) asparagine). 4 consecutive C-type lectin domains span residues 368–486, 493–625, 652–778, and 818–931; these read NNGF…YVCK, NDAS…ICKK, ASLS…IYLR, and IEGS…FICE. Intrachain disulfides connect cysteine 389–cysteine 485 and cysteine 462–cysteine 477. Asparagine 529 is a glycosylation site (N-linked (GlcNAc...) asparagine). Cysteine 597 and cysteine 614 are disulfide-bonded. 2 cysteine pairs are disulfide-bonded: cysteine 840/cysteine 930 and cysteine 904/cysteine 922. 2 N-linked (GlcNAc...) asparagine glycosylation sites follow: asparagine 843 and asparagine 865. Residue tyrosine 933 is modified to Phosphotyrosine. Residues asparagine 934, asparagine 1076, and asparagine 1103 are each glycosylated (N-linked (GlcNAc...) asparagine). In terms of domain architecture, C-type lectin 6 spans 958 to 1091; it reads FQNKCFLKIK…ERHFVSLCQK (134 aa). Cysteine 1060 and cysteine 1080 are joined by a disulfide. The C-type lectin 7 domain maps to 1110–1222; it reads YLNNLYKIIP…DNQPGAICYY (113 aa). Cysteine 1197 and cysteine 1211 form a disulfide bridge. N-linked (GlcNAc...) asparagine glycosylation is found at asparagine 1225, asparagine 1320, and asparagine 1392. The region spanning 1251 to 1374 is the C-type lectin 8 domain; sequence FQNCCYNFII…VIEEAVYFHQ (124 aa). C-type lectin domains lie at 1401 to 1513 and 1542 to 1661; these read YEDG…ICYK and YKGH…VCKV. A disulfide bond links cysteine 1488 and cysteine 1502. N-linked (GlcNAc...) asparagine glycans are attached at residues asparagine 1593 and asparagine 1626. Residues cysteine 1635 and cysteine 1650 are joined by a disulfide bond. A helical membrane pass occupies residues 1667–1691; it reads YTAIAIIVATLSILVLMGGLIWFLF. At 1692-1722 the chain is on the cytoplasmic side; the sequence is QRHRLHLAGFSSVRYAQGVNEDEIMLPSFHD. Serine 1703 and serine 1719 each carry phosphoserine.

N-glycosylated. As to expression, expressed in spleen, thymus, colon and peripheral blood lymphocytes. Detected in myeloid and B-lymphoid cell lines. Isoform 2 and isoform 3 are expressed in malignant Hodgkin lymphoma cells called Hodgkin and Reed-Sternberg (HRS) cells.

Its subcellular location is the membrane. Acts as an endocytic receptor to direct captured antigens from the extracellular space to a specialized antigen-processing compartment. Causes reduced proliferation of B-lymphocytes. The sequence is that of Lymphocyte antigen 75 (LY75) from Homo sapiens (Human).